Here is a 722-residue protein sequence, read N- to C-terminus: NCK-interacting protein with SH3 domain (722 aa).

An SH3 domain is found at 1–58 (MYRALYAFRSAEPNALAFAAGETFLVLERSSAHWWLAARARSGETGYVPPAYLRRLQG). Disordered regions lie at residues 101 to 122 (KETL…SSTS) and 149 to 286 (PSSE…ASDD). Low complexity predominate over residues 110–121 (SASSVAVMTSST). S120 is subject to Phosphoserine. Positions 169 to 185 (QIPPQPRRAAPTTPPPP) are enriched in pro residues. The short motif at 175 to 192 (RRAAPTTPPPPVKRRDRE) is the Nuclear localization signal element. Phosphothreonine is present on T181. The segment covering 206–240 (PSGGNSVSSGSSVSSTSLDTLYTSSSPSEPGSSCS) has biased composition (low complexity). Residue S294 is modified to Phosphoserine.

As to quaternary structure, associates with the intermediate filaments, vimentin and desmin. Binds the first and third SH3 domains of NCK. Binds the proline-rich domains of N-WASP through its SH3 domain. Similarly, binds diaphanous protein homolog 1 (DRF1). Binds the SH3 domains of GRB2 through its proline-rich domains. Interacts with Helicobacter pylori toxin vacA. Isoform 4 interacts with FHOD1. Interacts with FASLG. Interacts with TMIGD2. In terms of tissue distribution, highest expression in heart, brain, skeletal muscle, kidney and liver. Lower levels in placenta, lung, small intestine and leukocytes. Weak expression in colon, thymus and spleen.

The protein resides in the nucleus. Its function is as follows. Has an important role in stress fiber formation induced by active diaphanous protein homolog 1 (DRF1). Induces microspike formation, in vivo. In vitro, stimulates N-WASP-induced ARP2/3 complex activation in the absence of CDC42. May play an important role in the maintenance of sarcomeres and/or in the assembly of myofibrils into sarcomeres. Implicated in regulation of actin polymerization and cell adhesion. Plays a role in angiogenesis. The sequence is that of NCK-interacting protein with SH3 domain (NCKIPSD) from Homo sapiens (Human).